The following is a 361-amino-acid chain: 1-deoxy-D-xylulose 5-phosphate reductoisomerase (361 aa).

NADPH-binding residues include threonine 12, glycine 13, serine 14, isoleucine 15, glycine 38, and asparagine 102. Lysine 103 contacts 1-deoxy-D-xylulose 5-phosphate. Glutamate 104 lines the NADPH pocket. Aspartate 126 serves as a coordination point for Mn(2+). 1-deoxy-D-xylulose 5-phosphate-binding residues include serine 127, glutamate 128, serine 152, and histidine 175. A Mn(2+)-binding site is contributed by glutamate 128. Glycine 181 provides a ligand contact to NADPH. 1-deoxy-D-xylulose 5-phosphate contacts are provided by serine 188, asparagine 193, lysine 194, and glutamate 197. Glutamate 197 contacts Mn(2+).

Belongs to the DXR family. It depends on Mg(2+) as a cofactor. Mn(2+) is required as a cofactor.

It catalyses the reaction 2-C-methyl-D-erythritol 4-phosphate + NADP(+) = 1-deoxy-D-xylulose 5-phosphate + NADPH + H(+). The protein operates within isoprenoid biosynthesis; isopentenyl diphosphate biosynthesis via DXP pathway; isopentenyl diphosphate from 1-deoxy-D-xylulose 5-phosphate: step 1/6. In terms of biological role, catalyzes the NADPH-dependent rearrangement and reduction of 1-deoxy-D-xylulose-5-phosphate (DXP) to 2-C-methyl-D-erythritol 4-phosphate (MEP). The polypeptide is 1-deoxy-D-xylulose 5-phosphate reductoisomerase (Leifsonia xyli subsp. xyli (strain CTCB07)).